A 141-amino-acid chain; its full sequence is VLSPADKTNVKAAWDKVGGNAGEYGAEALERMFLSFPTTKTYFPHFDLAHGSPQVKGHGKKVGDALTNAVSHIDDLPGALSALSDLHAYKLRVDPVNFKLLSHCLLVTLANHLPSDFTPAVHASLDKFLASVSTVLTSKYR.

Positions 1–141 constitute a Globin domain; that stretch reads VLSPADKTNV…VSTVLTSKYR (141 aa). Ser3 is modified (phosphoserine). The residue at position 7 (Lys7) is an N6-succinyllysine. Thr8 is modified (phosphothreonine). Position 11 is an N6-succinyllysine (Lys11). An N6-acetyllysine; alternate modification is found at Lys16. The residue at position 16 (Lys16) is an N6-succinyllysine; alternate. Phosphotyrosine is present on Tyr24. Ser35 is subject to Phosphoserine. Lys40 is modified (N6-succinyllysine). His58 contacts O2. Residue His87 coordinates heme b. Ser102 carries the phosphoserine modification. Thr108 is modified (phosphothreonine). Phosphoserine occurs at positions 124 and 131. A phosphothreonine mark is found at Thr134 and Thr137. At Ser138 the chain carries Phosphoserine.

Belongs to the globin family. As to quaternary structure, heterotetramer of two alpha chains and two beta chains. As to expression, red blood cells.

In terms of biological role, involved in oxygen transport from the lung to the various peripheral tissues. Hemopressin acts as an antagonist peptide of the cannabinoid receptor CNR1. Hemopressin-binding efficiently blocks cannabinoid receptor CNR1 and subsequent signaling. The sequence is that of Hemoglobin subunit alpha (HBA) from Cynopterus sphinx (Indian short-nosed fruit bat).